The primary structure comprises 226 residues: Acyl-homoserine-lactone synthase (226 aa).

This sequence belongs to the autoinducer synthase family.

The enzyme catalyses a fatty acyl-[ACP] + S-adenosyl-L-methionine = an N-acyl-L-homoserine lactone + S-methyl-5'-thioadenosine + holo-[ACP] + H(+). Required for the synthesis of OHHL (N-(3-oxohexanoyl)-L-homoserine lactone), an autoinducer molecule. In Pseudomonas amygdali pv. tabaci (Pseudomonas syringae pv. tabaci), this protein is Acyl-homoserine-lactone synthase (psyI).